We begin with the raw amino-acid sequence, 196 residues long: MREFHYGVHMLAVEVGDITESDAEAIVNAANSSLMGGGGVDGAIHSAAGPELNGELVKIRRERYPNGLPPGEAVITRGYRLKASHIIHTVGPVWMGGRNGEDDVLYRSYRSCLDLAREFGIHDIAFPALSTGAYGFPFDRAERIAIRSVIDFLKDESAGYTVRFVFYTEDQGKRFLFILSDLGLPVNWNRDVQENT.

In terms of domain architecture, Macro spans M1–G183.

Belongs to the MacroD-type family.

This is an uncharacterized protein from Thermoplasma acidophilum (strain ATCC 25905 / DSM 1728 / JCM 9062 / NBRC 15155 / AMRC-C165).